A 255-amino-acid chain; its full sequence is MAYSIGIDSGSTATKGILLADGVITRRFLVPTPFRPATAITEAWETLREGLETTPFLTLTGYGRQLVDFADKQVTEISCHGLGARFLAPATRAVIDIGGQDSKVIQLDDDGNLCDFLMNDKCAAGTGRFLEVISRTLGTSVEQLDSITENVTPHAITSMCTVFAESEAISLRSAGVAPEAILAGVINAMARRSANFIARLSCEAPILFTGGVSHCQKFARMLESHLRMPVNTHPDAQFAGAIGAAVIGQRVRTRR.

2 residues coordinate [4Fe-4S] cluster: cysteine 122 and cysteine 160.

Homodimer. Requires [4Fe-4S] cluster as cofactor.

This is an uncharacterized protein from Escherichia coli (strain K12).